The chain runs to 67 residues: MEGISIAKLLIIGALIVLLFGTNKLRSLGGDLGSAIKGFKKAMKDEDTSATRTTAEDVPAERVVHKD.

Residues Met1 to Gly21 traverse the membrane as a helical segment. The interval Glu46–Asp67 is disordered.

Belongs to the TatA/E family. TatE subfamily.

The protein resides in the cell inner membrane. In terms of biological role, part of the twin-arginine translocation (Tat) system that transports large folded proteins containing a characteristic twin-arginine motif in their signal peptide across membranes. TatE shares overlapping functions with TatA. This chain is Probable Sec-independent protein translocase protein TatE, found in Pantoea vagans (strain C9-1) (Pantoea agglomerans (strain C9-1)).